The chain runs to 197 residues: dTTP/UTP pyrophosphatase (197 aa).

The active-site Proton acceptor is D70.

This sequence belongs to the Maf family. YhdE subfamily. The cofactor is a divalent metal cation.

The protein localises to the cytoplasm. It catalyses the reaction dTTP + H2O = dTMP + diphosphate + H(+). The enzyme catalyses UTP + H2O = UMP + diphosphate + H(+). In terms of biological role, nucleoside triphosphate pyrophosphatase that hydrolyzes dTTP and UTP. May have a dual role in cell division arrest and in preventing the incorporation of modified nucleotides into cellular nucleic acids. The sequence is that of dTTP/UTP pyrophosphatase from Pectobacterium atrosepticum (strain SCRI 1043 / ATCC BAA-672) (Erwinia carotovora subsp. atroseptica).